A 35-amino-acid polypeptide reads, in one-letter code: Cycloamanide F proprotein (35 aa).

Residues 1–10 constitute a propeptide that is removed on maturation; sequence MSDINATRLP. Residues 11-18 constitute a cross-link (cyclopeptide (Ile-Pro)); sequence IVGILGLP. Positions 19–35 are excised as a propeptide; it reads CIGDDVNSTLTHGEDLC.

The protein belongs to the MSDIN fungal toxin family. Processed by the macrocyclase-peptidase enzyme POPB to yield a cyclic decapeptide. POPB first removes 10 residues from the N-terminus. Conformational trapping of the remaining peptide forces the enzyme to release this intermediate rather than proceed to macrocyclization. The enzyme rebinds the remaining peptide in a different conformation and catalyzes macrocyclization of the N-terminal 8 residues.

Cyclic octapeptide that belongs to the MSDIN-like toxin family responsible for a large number of food poisoning cases and deaths. Cycloaminide E is structurally related to other cycloamanides that are non-toxic to mammals but show immunosuppressive activity. In Amanita phalloides (Death cap), this protein is Cycloamanide F proprotein.